The following is a 404-amino-acid chain: MQAEEQFSCGVIVVAAGRGERAGQSSEGPKQYRTVGDRPVITHTLDVFATWDGTGPVVVVIHPEDEELFASARKRMGHMLDLTVVHGGATRQLSVLAGLQAIAGAGVKHVMIHDAVRPFFDHALLDRCRAALRNGAGAVLPAVAVADTLKRAQAGGLVAETVPRTDLHAAQTPQCFRLEAILSAHRQAAASGQADFTDDASIAEWAGIPVHLVEGSPDNFKLTLRRDLSMADEKLTRMAIPDVRTGNGYDVHQLVEGDGVTLCGVFIPHDRKLSGHSDADVALHALTDALLATCGAGDIGDHFPPSDPRWKGAPSHIFLEHAARIVRERGGTITHADISLIAEAPKVGPHRQQMRESLSAMLAIAIDRCSVKATTNEKLGFVGRNEGIAAIATATVVYASGGDA.

The tract at residues 1-243 (MQAEEQFSCG…KLTRMAIPDV (243 aa)) is 2-C-methyl-D-erythritol 4-phosphate cytidylyltransferase. The 2-C-methyl-D-erythritol 2,4-cyclodiphosphate synthase stretch occupies residues 244-404 (RTGNGYDVHQ…TVVYASGGDA (161 aa)). 2 residues coordinate a divalent metal cation: Asp-250 and His-252. 4-CDP-2-C-methyl-D-erythritol 2-phosphate contacts are provided by residues 250–252 (DVH) and 276–277 (HS). His-284 contacts a divalent metal cation. 4-CDP-2-C-methyl-D-erythritol 2-phosphate is bound by residues 298–300 (DIG), 374–377 (TTNE), Phe-381, and Arg-384.

It in the N-terminal section; belongs to the IspD/TarI cytidylyltransferase family. IspD subfamily. The protein in the C-terminal section; belongs to the IspF family. It depends on a divalent metal cation as a cofactor.

It catalyses the reaction 2-C-methyl-D-erythritol 4-phosphate + CTP + H(+) = 4-CDP-2-C-methyl-D-erythritol + diphosphate. It carries out the reaction 4-CDP-2-C-methyl-D-erythritol 2-phosphate = 2-C-methyl-D-erythritol 2,4-cyclic diphosphate + CMP. It participates in isoprenoid biosynthesis; isopentenyl diphosphate biosynthesis via DXP pathway; isopentenyl diphosphate from 1-deoxy-D-xylulose 5-phosphate: step 2/6. It functions in the pathway isoprenoid biosynthesis; isopentenyl diphosphate biosynthesis via DXP pathway; isopentenyl diphosphate from 1-deoxy-D-xylulose 5-phosphate: step 4/6. In terms of biological role, bifunctional enzyme that catalyzes the formation of 4-diphosphocytidyl-2-C-methyl-D-erythritol from CTP and 2-C-methyl-D-erythritol 4-phosphate (MEP) (IspD), and catalyzes the conversion of 4-diphosphocytidyl-2-C-methyl-D-erythritol 2-phosphate (CDP-ME2P) to 2-C-methyl-D-erythritol 2,4-cyclodiphosphate (ME-CPP) with a corresponding release of cytidine 5-monophosphate (CMP) (IspF). This is Bifunctional enzyme IspD/IspF from Sinorhizobium medicae (strain WSM419) (Ensifer medicae).